Consider the following 350-residue polypeptide: tRNA dimethylallyltransferase (350 aa).

An ATP-binding site is contributed by 34–41 (GPTASGKT). Residue 36–41 (TASGKT) participates in substrate binding. 3 interaction with substrate tRNA regions span residues 63–66 (DSAL), 187–191 (QRIQR), and 274–279 (RCVGYR).

It belongs to the IPP transferase family. Monomer. The cofactor is Mg(2+).

It carries out the reaction adenosine(37) in tRNA + dimethylallyl diphosphate = N(6)-dimethylallyladenosine(37) in tRNA + diphosphate. Functionally, catalyzes the transfer of a dimethylallyl group onto the adenine at position 37 in tRNAs that read codons beginning with uridine, leading to the formation of N6-(dimethylallyl)adenosine (i(6)A). This chain is tRNA dimethylallyltransferase, found in Paracidovorax citrulli (strain AAC00-1) (Acidovorax citrulli).